Reading from the N-terminus, the 207-residue chain is MQLGLDFGRVEALVAGVDEVGRGPLCGAVVTAAVILDPERPILGLNDSKKLSEARREALSEEIREKALAWCIARAEVEEIDRLNILHATMLAMRRAVEGLAVTPRLALIDGNRCPKLAVPCAPVIKGDAQVPAIAAASILAKVARDREMLVLDALYPGYGLARHKGYPTAVHLEALARLGPTPIHRRSFAPVRELLDVVSIPCAPTS.

Positions 12–201 constitute an RNase H type-2 domain; the sequence is ALVAGVDEVG…VRELLDVVSI (190 aa). Asp-18, Glu-19, and Asp-110 together coordinate a divalent metal cation.

Belongs to the RNase HII family. Mn(2+) serves as cofactor. The cofactor is Mg(2+).

It is found in the cytoplasm. The catalysed reaction is Endonucleolytic cleavage to 5'-phosphomonoester.. In terms of biological role, endonuclease that specifically degrades the RNA of RNA-DNA hybrids. In Azotobacter vinelandii (strain DJ / ATCC BAA-1303), this protein is Ribonuclease HII.